The sequence spans 306 residues: Protein pxr1 (306 aa).

A compositionally biased stretch (basic residues) spans 1–11 (MGLAAPRKRTK). Disordered regions lie at residues 1 to 27 (MGLAAPRKRTKISHDPNNTNWSRSTSG) and 148 to 241 (AQKE…SDIP). Over residues 15 to 27 (DPNNTNWSRSTSG) the composition is skewed to polar residues. Residues 25 to 79 (TSGYGHKIMSSQGWTPGSFLGARNAAHADMFTAASASHIRVVVKDDTLGLGARSK) enclose the G-patch domain. Positions 182 to 191 (NTLKALREEQ) are enriched in basic and acidic residues. Residues 219–228 (KKERKTKKRK) show a composition bias toward basic residues.

This sequence belongs to the PINX1 family.

Its subcellular location is the nucleus. It localises to the nucleolus. Its function is as follows. Involved in rRNA-processing at A0, A1 and A2 sites and negatively regulates telomerase. This chain is Protein pxr1 (pxr1), found in Aspergillus oryzae (strain ATCC 42149 / RIB 40) (Yellow koji mold).